Reading from the N-terminus, the 336-residue chain is Dihydroorotate dehydrogenase (quinone) (336 aa).

FMN contacts are provided by residues 62–66 (AGLDK) and Thr86. Residue Lys66 participates in substrate binding. Residue 111–115 (NRMGF) coordinates substrate. Residues Asn139 and Asn172 each coordinate FMN. Asn172 provides a ligand contact to substrate. The Nucleophile role is filled by Ser175. Asn177 is a substrate binding site. Residues Lys217 and Thr245 each contribute to the FMN site. Position 246 to 247 (246 to 247 (NT)) interacts with substrate. Residues Gly268, Gly297, and 318–319 (YS) contribute to the FMN site.

Belongs to the dihydroorotate dehydrogenase family. Type 2 subfamily. As to quaternary structure, monomer. The cofactor is FMN.

Its subcellular location is the cell membrane. It catalyses the reaction (S)-dihydroorotate + a quinone = orotate + a quinol. It functions in the pathway pyrimidine metabolism; UMP biosynthesis via de novo pathway; orotate from (S)-dihydroorotate (quinone route): step 1/1. Its function is as follows. Catalyzes the conversion of dihydroorotate to orotate with quinone as electron acceptor. This is Dihydroorotate dehydrogenase (quinone) from Salmonella agona (strain SL483).